A 1058-amino-acid chain; its full sequence is Gem-associated protein 4 (1058 aa).

N-acetylmethionine is present on Met-1. Thr-84 is subject to Phosphothreonine. Phosphoserine is present on residues Ser-86 and Ser-205. Residues 714-735 (LPKEKRCLSLDRKDLAIHILEL) form a leucine-zipper region.

As to quaternary structure, part of the core SMN complex that contains SMN1, GEMIN2/SIP1, DDX20/GEMIN3, GEMIN4, GEMIN5, GEMIN6, GEMIN7, GEMIN8 and STRAP/UNRIP. Part of the SMN-Sm complex that contains SMN1, GEMIN2/SIP1, DDX20/GEMIN3, GEMIN4, GEMIN5, GEMIN6, GEMIN7, GEMIN8, STRAP/UNRIP and the Sm proteins SNRPB, SNRPD1, SNRPD2, SNRPD3, SNRPE, SNRPF and SNRPG. Interacts with GEMIN3; the interaction is direct. Interacts with GEMIN5. Interacts with GEMIN8; the interaction is direct. Interacts with several snRNP SM core proteins, including SNRPB, SNRPD1, SNRPD2, SNRPD3 and SNRPE. Interacts with PPP4R2.

The protein resides in the cytoplasm. Its subcellular location is the nucleus. It is found in the nucleolus. The protein localises to the gem. Functionally, the SMN complex catalyzes the assembly of small nuclear ribonucleoproteins (snRNPs), the building blocks of the spliceosome, and thereby plays an important role in the splicing of cellular pre-mRNAs. Most spliceosomal snRNPs contain a common set of Sm proteins SNRPB, SNRPD1, SNRPD2, SNRPD3, SNRPE, SNRPF and SNRPG that assemble in a heptameric protein ring on the Sm site of the small nuclear RNA to form the core snRNP (Sm core). In the cytosol, the Sm proteins SNRPD1, SNRPD2, SNRPE, SNRPF and SNRPG are trapped in an inactive 6S pICln-Sm complex by the chaperone CLNS1A that controls the assembly of the core snRNP. To assemble core snRNPs, the SMN complex accepts the trapped 5Sm proteins from CLNS1A forming an intermediate. Binding of snRNA inside 5Sm triggers eviction of the SMN complex, thereby allowing binding of SNRPD3 and SNRPB to complete assembly of the core snRNP. The sequence is that of Gem-associated protein 4 (GEMIN4) from Homo sapiens (Human).